We begin with the raw amino-acid sequence, 382 residues long: tRNA (guanine(26)-N(2))-dimethyltransferase (382 aa).

Positions 4–373 (VEIIEGKARI…KNLDEIKECI (370 aa)) constitute a Trm1 methyltransferase domain. S-adenosyl-L-methionine-binding residues include Arg44, Arg69, and Asp87. Cys246, Cys249, Cys263, and Cys266 together coordinate Zn(2+).

This sequence belongs to the class I-like SAM-binding methyltransferase superfamily. Trm1 family.

The catalysed reaction is guanosine(26) in tRNA + 2 S-adenosyl-L-methionine = N(2)-dimethylguanosine(26) in tRNA + 2 S-adenosyl-L-homocysteine + 2 H(+). In terms of biological role, dimethylates a single guanine residue at position 26 of a number of tRNAs using S-adenosyl-L-methionine as donor of the methyl groups. The sequence is that of tRNA (guanine(26)-N(2))-dimethyltransferase from Sulfolobus acidocaldarius (strain ATCC 33909 / DSM 639 / JCM 8929 / NBRC 15157 / NCIMB 11770).